A 173-amino-acid chain; its full sequence is Large ribosomal subunit protein uL10 (173 aa).

Belongs to the universal ribosomal protein uL10 family. Part of the ribosomal stalk of the 50S ribosomal subunit. The N-terminus interacts with L11 and the large rRNA to form the base of the stalk. The C-terminus forms an elongated spine to which L12 dimers bind in a sequential fashion forming a multimeric L10(L12)X complex.

Functionally, forms part of the ribosomal stalk, playing a central role in the interaction of the ribosome with GTP-bound translation factors. This chain is Large ribosomal subunit protein uL10, found in Corynebacterium aurimucosum (strain ATCC 700975 / DSM 44827 / CIP 107346 / CN-1) (Corynebacterium nigricans).